An 88-amino-acid polypeptide reads, in one-letter code: Small ribosomal subunit protein bS16 (88 aa).

Belongs to the bacterial ribosomal protein bS16 family.

This Mycoplasmopsis pulmonis (strain UAB CTIP) (Mycoplasma pulmonis) protein is Small ribosomal subunit protein bS16.